We begin with the raw amino-acid sequence, 213 residues long: Ribosome maturation factor RimM (213 aa).

The PRC barrel domain maps to 99–175 (DQDAAYISDL…RITMRLPEGL (77 aa)). Positions 182–213 (TATAREPRARRTRKRGLRKPITGADATPPDSQ) are disordered. The span at 189–199 (RARRTRKRGLR) shows a compositional bias: basic residues.

It belongs to the RimM family. In terms of assembly, binds ribosomal protein uS19.

The protein localises to the cytoplasm. In terms of biological role, an accessory protein needed during the final step in the assembly of 30S ribosomal subunit, possibly for assembly of the head region. Essential for efficient processing of 16S rRNA. May be needed both before and after RbfA during the maturation of 16S rRNA. It has affinity for free ribosomal 30S subunits but not for 70S ribosomes. The polypeptide is Ribosome maturation factor RimM (Acidobacterium capsulatum (strain ATCC 51196 / DSM 11244 / BCRC 80197 / JCM 7670 / NBRC 15755 / NCIMB 13165 / 161)).